A 273-amino-acid chain; its full sequence is Beta-lactamase OXA-133 (273 aa).

The first 17 residues, 1 to 17 (MNKYFTCYVVASLFFSG), serve as a signal peptide directing secretion. A lipid anchor (N-palmitoyl cysteine) is attached at C18. The S-diacylglycerol cysteine moiety is linked to residue C18. Residue S79 is the Acyl-ester intermediate of the active site. K82 carries the N6-carboxylysine modification. Substrate is bound at residue 216-218 (KTG).

This sequence belongs to the class-D beta-lactamase family.

The protein localises to the cell membrane. The catalysed reaction is a beta-lactam + H2O = a substituted beta-amino acid. Catalyzes the hydrolysis of beta-lactam antibiotics. The sequence is that of Beta-lactamase OXA-133 from Acinetobacter radioresistens.